The following is a 428-amino-acid chain: MSTVVVVGTQWGDEGKGKITDYLAESAEVVARYQGGNNAGHTIIFDGNKYKLHLIPSGIFYSDKTCVIGNGMVIDPKALVKELEYIHSFGFSTSNLKISDRAHVILPYHIKLDGVEEDSRGANKIGTTRKGIGPAYMDKAARIGIRIADLLDRDEFARKLERNLAEKNMLLEKLYNTTGFELKEILDEYLALAEIIRPYVTDTSVVLNDSIDSGNRVLFEGAQGVLLDIDQGTYPYVTSSNPIAGGVTIGSGVGPTKIHQVIGVAKAYTTRVGDGPFLTELNDATGDHIREVGFEYGTTTGRPRRVGWFDSVVVRHARRVSGITGLAITKLDTLSGIETLRICTAYKYNGEIIESFPANLNLLAKCEPVYEELPGWTEDITGIRNLNDLPENARHYIERITQLTGIPMSIFSVGPDREQTVVVRGIYG.

Residues 12–18 (GDEGKGK) and 40–42 (GHT) contribute to the GTP site. Asp13 acts as the Proton acceptor in catalysis. Mg(2+)-binding residues include Asp13 and Gly40. IMP-binding positions include 13 to 16 (DEGK), 38 to 41 (NAGH), Thr128, Arg142, Gln223, Thr238, and Arg302. The active-site Proton donor is the His41. Residue 298 to 304 (TTTGRPR) coordinates substrate. GTP is bound by residues Arg304, 330–332 (KLD), and 412–414 (SVG).

It belongs to the adenylosuccinate synthetase family. In terms of assembly, homodimer. Mg(2+) serves as cofactor.

It localises to the cytoplasm. It carries out the reaction IMP + L-aspartate + GTP = N(6)-(1,2-dicarboxyethyl)-AMP + GDP + phosphate + 2 H(+). The protein operates within purine metabolism; AMP biosynthesis via de novo pathway; AMP from IMP: step 1/2. Functionally, plays an important role in the de novo pathway of purine nucleotide biosynthesis. Catalyzes the first committed step in the biosynthesis of AMP from IMP. This Brevibacillus brevis (strain 47 / JCM 6285 / NBRC 100599) protein is Adenylosuccinate synthetase.